The sequence spans 175 residues: Protein FMP23, mitochondrial (175 aa).

The N-terminal 38 residues, 1-38 (MLINHLSKIRTVRHFSNIKPVLSKEVSRRVIVAPASHF), are a transit peptide targeting the mitochondrion.

The protein localises to the mitochondrion. In terms of biological role, may be involved in mitochondrial iron or copper homeostatis. The polypeptide is Protein FMP23, mitochondrial (FMP23) (Saccharomyces cerevisiae (strain ATCC 204508 / S288c) (Baker's yeast)).